The chain runs to 430 residues: Ethylene-responsive transcription factor WRI1 (430 aa).

The span at 1 to 26 (MKKRLTTSTCSSSPSSSVSSSTTTSS) shows a compositional bias: low complexity. Residues 1 to 66 (MKKRLTTSTC…PASTRRSSIY (66 aa)) are disordered. Over residues 53–63 (NPTSPASTRRS) the composition is skewed to polar residues. A DNA-binding region (AP2/ERF 1) is located at residues 65–131 (IYRGVTRHRW…WGPDTILNFP (67 aa)). Phosphothreonine; by KIN10 is present on T70. S166 is modified (phosphoserine; by KIN10). The segment at residues 167–225 (KYRGVARHHHNGRWEARIGRVFGNKYLYLGTYNTQEEAAAAYDMAAIEYRGANAVTNFD) is a DNA-binding region (AP2/ERF 2). Over residues 260-274 (VETREAKEEPREEVK) the composition is skewed to basic and acidic residues. Disordered regions lie at residues 260–297 (VETREAKEEPREEVKQQYVEEPPQEEEEKEEEKAEQQE) and 398–422 (SPPSSSSPLSCLSTDSASSTTTTTT).

The protein belongs to the AP2/ERF transcription factor family. AP2 subfamily. In terms of assembly, interacts with KIN10 and KIN11. Post-translationally, ubiquitinated. In terms of processing, the phosphorylation at Thr-70 and Ser-166 by KIN10 facilitates its degradation via the proteasomal pathway. In terms of tissue distribution, mostly expressed in siliques, especially in seeds. Also detected in roots and flowers, and, to a lower extent, in leaves stems and seedlings.

The protein localises to the nucleus. Down-regulated by KIN10 that controls its protein stability under a phosphorylation-dependent manner. Its function is as follows. May be involved in the regulation of gene expression by stress factors and by components of stress signal transduction pathways. Transcriptional activator involved in the activation of a subset of sugar-responsive genes and the control of carbon flow from sucrose import to oil accumulation in developing seeds. Binds to the GCC-box pathogenesis-related promoter element. Promotes sugar uptake and seed oil accumulation by glycolysis. Required for embryo development, seed germination and, indirectly, for seedling establishment. Negative regulator of the ABA-mediated germination inhibition. This Arabidopsis thaliana (Mouse-ear cress) protein is Ethylene-responsive transcription factor WRI1 (WRI1).